The chain runs to 961 residues: MLQTTLLALQGLSCMNCAQRVKAALESREDVHHAEVNVHYAKVTGEADTHALIETIKQTGYQATEAQTPDVELHLSGLSCGHCTETVRKALEAVSGVISADVTLESANVYGKADIQTLIAAVEQAGYHATQQGIDSPKTEPLTHSAQSQPESLAAAPNTVPATNVALATSTVSDTNTVLPTNTALPTNTTSTTSTADTASATSTAPVINPLPVTESVAQPAASEGESVQLLLTGMSCASCVSKVQNALQRVDGVQVARVNLAERSALVTGTQNNEALIAAVKNAGYGAEIIEDEGERRERQQQMSQASMKRFQWQAALGLLLGIPLMAWGLFGGSMTLTPETQTPWLIIGIITLLVMIFAGGHFYRNAWVSLKNGRATMDTLVALGTGAAWIYSITVNIWPDVFPMEARHLYYEASAMIIGLINLGHAMEQRARQRSSNALERLLDLAPPTAKLVTDDGEKVIPLADVQLGMILRLTTGDRVPVDGEIVQGEVWMDEAMLTGEPIPQQKSVGDIVHAGTQVQDGTVQFRASAIGSQTTLARIIKLVRQAQSSKPEIGKLADRISAVFVPTVVVIAIVAGLIWYFFGPQPQLVYTLVVATTVLIIACPCALGLATPMSIISGVGRAAEFGVLVRDADALQQASNLDTLVFDKTGTLTEGHPQVVAIHTFNGVSEQQALGWAAALETGSNHPLARAILQRAEGLTLATASQFRTLRGLGVSGEVDGIPLLLGNNRLLEEQQIDTRELQSLIQQQAESGATPVILTANGKPAALLSIRDPLREDSIGALQRLHQLGYSLVMLTGDNPITANAIAKEAGIDRVIAGVLPDGKADAIKQLQAAGHKVAMIGDGINDAPALAQADVGIAMGGGSDIAIETAAITLMRHSLYGVVDAVELSKATLRNMKQNLLGAFFYNALGIPIAAGILYPFTGTLLSPVVAGAAMALSSITVVSNANRLLRFKPKQ.

HMA domains lie at 3–64 (QTTL…YQAT) and 69–130 (PDVE…YHAT). 4 residues coordinate Cu(+): C14, C17, C80, and C83. 2 disordered regions span residues 131-153 (QQGIDSPKTEPLTHSAQSQPESL) and 178-201 (VLPTNTALPTNTTSTTSTADTASA). The span at 142–151 (LTHSAQSQPE) shows a compositional bias: polar residues. Residues 226–289 (ESVQLLLTGM…AVKNAGYGAE (64 aa)) enclose the HMA 3 domain. Residues C237 and C240 each coordinate Cu(+). The next 5 membrane-spanning stretches (helical) occupy residues 316–336 (AALGLLLGIPLMAWGLFGGSM), 345–365 (PWLIIGIITLLVMIFAGGHFY), 381–401 (TLVALGTGAAWIYSITVNIWP), 565–585 (AVFVPTVVVIAIVAGLIWYFF), and 592–612 (VYTLVVATTVLIIACPCALGL). Residue D650 is the 4-aspartylphosphate intermediate of the active site. D847 and D851 together coordinate Mg(2+). Transmembrane regions (helical) follow at residues 860-880 (VGIAMGGGSDIAIETAAITLM), 906-926 (LGAFFYNALGIPIAAGILYPF), and 928-948 (GTLLSPVVAGAAMALSSITVV).

Belongs to the cation transport ATPase (P-type) (TC 3.A.3) family. Type IB subfamily.

It is found in the cell membrane. It catalyses the reaction Cu(+)(in) + ATP + H2O = Cu(+)(out) + ADP + phosphate + H(+). Involved in copper export. In Yersinia pestis, this protein is Copper-exporting P-type ATPase (copA).